The sequence spans 397 residues: Enoyl-[acyl-carrier-protein] reductase [NADH] (397 aa).

Residues 48–53 (GASTGY), 74–75 (FE), 111–112 (DA), and 139–140 (VA) contribute to the NAD(+) site. Tyrosine 225 contacts substrate. The active-site Proton donor is tyrosine 235. NAD(+) is bound by residues lysine 244 and 273-275 (VVT).

The protein belongs to the TER reductase family. As to quaternary structure, monomer.

It catalyses the reaction a 2,3-saturated acyl-[ACP] + NAD(+) = a (2E)-enoyl-[ACP] + NADH + H(+). The protein operates within lipid metabolism; fatty acid biosynthesis. Its function is as follows. Involved in the final reduction of the elongation cycle of fatty acid synthesis (FAS II). Catalyzes the reduction of a carbon-carbon double bond in an enoyl moiety that is covalently linked to an acyl carrier protein (ACP). The chain is Enoyl-[acyl-carrier-protein] reductase [NADH] from Burkholderia pseudomallei (strain 668).